We begin with the raw amino-acid sequence, 116 residues long: uncharacterized protein (116 aa).

The region spanning 2–73 (DGSVGTGRQV…PKALICGHRD (72 aa)) is the N-acetylmuramoyl-L-alanine amidase domain.

This sequence to phage T3 and T7 N-acetylmuramoyl-L-alanine amidases.

This is an uncharacterized protein from Haemophilus influenzae (strain ATCC 51907 / DSM 11121 / KW20 / Rd).